The chain runs to 214 residues: YINYKNMSHQHTLMLFNLLPVGSNISTWWNFGSMLLSCSMIQIMTGFFLAIHYTANINLAFSSIIHISRDVPYGWIMQNTHAIGASLFFICIYIHIARGLYYGSYLNKEVWLSGTTLLIILMATAFFGYVLPWGQMSFWAATVITNLLTAIPYLGTTLTTWLWGGFAINDPTLTRFFALHFILPFAIISMSSIHILLLHNEGSSNPLGTNSDID.

Transmembrane regions (helical) follow at residues 31-51 (FGSM…FLAI), 75-96 (WIMQ…YIHI), 111-131 (WLSG…GYVL), and 176-196 (FFAL…IHIL). Residues histidine 81 and histidine 95 each contribute to the heme b site. Heme b contacts are provided by histidine 180 and histidine 194. Histidine 199 is an a ubiquinone binding site.

Belongs to the cytochrome b family. The cytochrome bc1 complex contains 3 respiratory subunits (MT-CYB, CYC1 and UQCRFS1), 2 core proteins (UQCRC1 and UQCRC2) and probably 6 low-molecular weight proteins. Heme b serves as cofactor.

Its subcellular location is the mitochondrion inner membrane. In terms of biological role, component of the ubiquinol-cytochrome c reductase complex (complex III or cytochrome b-c1 complex) that is part of the mitochondrial respiratory chain. The b-c1 complex mediates electron transfer from ubiquinol to cytochrome c. Contributes to the generation of a proton gradient across the mitochondrial membrane that is then used for ATP synthesis. The sequence is that of Cytochrome b (MT-CYB) from Trimeresurus stejnegeri (Chinese green tree viper).